The following is a 429-amino-acid chain: Glutamate-1-semialdehyde 2,1-aminomutase (429 aa).

K267 carries the post-translational modification N6-(pyridoxal phosphate)lysine.

Belongs to the class-III pyridoxal-phosphate-dependent aminotransferase family. HemL subfamily. In terms of assembly, homodimer. The cofactor is pyridoxal 5'-phosphate.

The protein localises to the cytoplasm. It catalyses the reaction (S)-4-amino-5-oxopentanoate = 5-aminolevulinate. Its pathway is porphyrin-containing compound metabolism; protoporphyrin-IX biosynthesis; 5-aminolevulinate from L-glutamyl-tRNA(Glu): step 2/2. The sequence is that of Glutamate-1-semialdehyde 2,1-aminomutase from Herpetosiphon aurantiacus (strain ATCC 23779 / DSM 785 / 114-95).